Consider the following 366-residue polypeptide: Phospho-N-acetylmuramoyl-pentapeptide-transferase (366 aa).

Transmembrane regions (helical) follow at residues 27–47 (AALF…IASL), 71–91 (TPTM…LLWA), 93–113 (LSSI…AIGF), 138–158 (FVIA…AGAA), 174–194 (LMLN…VGAG), 205–225 (GLAI…AYLA), 245–265 (LAVI…FNAP), 268–288 (AIFM…TVAV), 297–317 (VIIG…VFWF), and 343–363 (QVVI…LSTL).

It belongs to the glycosyltransferase 4 family. MraY subfamily. The cofactor is Mg(2+).

The protein resides in the cell inner membrane. It carries out the reaction UDP-N-acetyl-alpha-D-muramoyl-L-alanyl-gamma-D-glutamyl-meso-2,6-diaminopimeloyl-D-alanyl-D-alanine + di-trans,octa-cis-undecaprenyl phosphate = di-trans,octa-cis-undecaprenyl diphospho-N-acetyl-alpha-D-muramoyl-L-alanyl-D-glutamyl-meso-2,6-diaminopimeloyl-D-alanyl-D-alanine + UMP. It functions in the pathway cell wall biogenesis; peptidoglycan biosynthesis. In terms of biological role, catalyzes the initial step of the lipid cycle reactions in the biosynthesis of the cell wall peptidoglycan: transfers peptidoglycan precursor phospho-MurNAc-pentapeptide from UDP-MurNAc-pentapeptide onto the lipid carrier undecaprenyl phosphate, yielding undecaprenyl-pyrophosphoryl-MurNAc-pentapeptide, known as lipid I. This is Phospho-N-acetylmuramoyl-pentapeptide-transferase from Sinorhizobium medicae (strain WSM419) (Ensifer medicae).